The following is a 209-amino-acid chain: dTTP/UTP pyrophosphatase (209 aa).

Asp79 serves as the catalytic Proton acceptor.

The protein belongs to the Maf family. YhdE subfamily. The cofactor is a divalent metal cation.

The protein localises to the cytoplasm. The enzyme catalyses dTTP + H2O = dTMP + diphosphate + H(+). It carries out the reaction UTP + H2O = UMP + diphosphate + H(+). Its function is as follows. Nucleoside triphosphate pyrophosphatase that hydrolyzes dTTP and UTP. May have a dual role in cell division arrest and in preventing the incorporation of modified nucleotides into cellular nucleic acids. This is dTTP/UTP pyrophosphatase from Bradyrhizobium diazoefficiens (strain JCM 10833 / BCRC 13528 / IAM 13628 / NBRC 14792 / USDA 110).